The following is a 255-amino-acid chain: Protein patched homolog 2 (255 aa).

Topologically, residues 1 to 197 are extracellular; the sequence is SLLQGGSAYL…LNDIMKSFSD (197 aa). Asn-147 and Asn-175 each carry an N-linked (GlcNAc...) asparagine glycan. A helical transmembrane segment spans residues 198–218; the sequence is VSVIRVAGGYLLMLAYACVTM. An SSD domain is found at 199-255; the sequence is SVIRVAGGYLLMLAYACVTMLRWDCTKSQGAVGLAGVLLVALSVASGLGLCSLLGIS. The Cytoplasmic portion of the chain corresponds to 219-227; it reads LRWDCTKSQ. A helical membrane pass occupies residues 228–248; that stretch reads GAVGLAGVLLVALSVASGLGL. Residues 249-255 lie on the Extracellular side of the membrane; it reads CSLLGIS.

The protein belongs to the patched family. In terms of tissue distribution, in the eye, detected in neural retina, iris, retinal pigment epithelium, but not in lens.

Its subcellular location is the membrane. Its function is as follows. May act as a receptor for sonic hedgehog (SHH). This Cynops pyrrhogaster (Japanese fire-bellied newt) protein is Protein patched homolog 2 (PTC2).